A 151-amino-acid polypeptide reads, in one-letter code: Small ribosomal subunit protein uS15 (151 aa).

It belongs to the universal ribosomal protein uS15 family. As to quaternary structure, component of the small ribosomal subunit.

It is found in the cytoplasm. Functionally, component of the small ribosomal subunit. The ribosome is a large ribonucleoprotein complex responsible for the synthesis of proteins in the cell. This Xenopus laevis (African clawed frog) protein is Small ribosomal subunit protein uS15 (rps13).